Reading from the N-terminus, the 410-residue chain is Polyprenol-phosphate-mannose-dependent alpha-(1-2)-phosphatidylinositol pentamannoside mannosyltransferase (410 aa).

Transmembrane regions (helical) follow at residues 31 to 51 (LAPM…YLVP), 96 to 116 (FAAI…AFIW), 160 to 180 (TFDY…AVST), 188 to 208 (LLVG…LYFL), 214 to 234 (AAVA…WLVV), 276 to 296 (GFGP…LLAW), 306 to 326 (LGGI…SWTH), 328 to 348 (WVWL…ALRG), 351 to 371 (ILGW…LSFA), and 384 to 404 (LAWA…WIAF).

The protein belongs to the glycosyltransferase 87 family.

It localises to the cell membrane. Its pathway is phospholipid metabolism; phosphatidylinositol metabolism. Functionally, catalyzes the alpha-1,2 addition of a mannose residue from polyprenol-phosphate-mannose (PPM) to a monoacyl phosphatidylinositol tetramannoside (AcPIM4) to generate a monoacyl phosphatidylinositol pentamannoside (AcPIM5). The polypeptide is Polyprenol-phosphate-mannose-dependent alpha-(1-2)-phosphatidylinositol pentamannoside mannosyltransferase (Mycolicibacterium smegmatis (strain ATCC 700084 / mc(2)155) (Mycobacterium smegmatis)).